A 456-amino-acid polypeptide reads, in one-letter code: SWI/SNF complex component SNF12 homolog (456 aa).

The SWIB/MDM2 domain maps to 234–310 (HVPQKYKVLG…PQLLREHLSP (77 aa)). A disordered region spans residues 435–456 (KQTTPNPTPQQISMAPSTPQTP).

Belongs to the SMARCD family. Part of a SWI-SNF complex.

It localises to the nucleus. Functionally, involved in transcriptional activation and repression of select genes by chromatin remodeling (alteration of DNA-nucleosome topology). The polypeptide is SWI/SNF complex component SNF12 homolog (snf12-1) (Dictyostelium discoideum (Social amoeba)).